A 609-amino-acid chain; its full sequence is MPDDFNLKSFLADLPHLPGVYRHLDAAGEVMYVGKARDLKKRVSSYFQKNLASPRIAQMVAKVASVDVTVTRSEAEALLLENNLIKSLRPRYNILFRDDKSYPYLLITGHAWPRIAYYRGATSKRGQYFGPYPNSWAVRETIQILQKVFRLRTCEDTVFANRSRPCLLHQIGRCSAPCVGVIEAGDYAHDVQRAVRFLNGEAREVMDEIEARMLQASTELRFEEAAVLRDQMGSLSKVLHQQTMENVGGDDTDVIAVASAGGKICVNLAMVRGGRHLGDKPFFPTHAEGEQPAQVLEAFVAQHYADGAMPPVLVCSHALPDSGLVGLLAEQGGTRAARVLTRPQGVRRSWLEQAQKNAEMALARALTESGARAGRTLALAEALDLDTDEESLDALRIECFDISHTAGEATQASCVVFLHHDMQPSLYRRYNIVGITPGDDYAAMRQVLTRRFGKVADGEAPMPGLVLIDGGKGQVEVARQVFVELGLDIQSLVGVAKGEGRKVGLETLVFADGRPPVALGKESAALMLIAQVRDEAHRFAITGMRARRAKTRNVSRLEEIEGIGARRRQRLLARFGGLSGVSSASIEDLASVEGISQELAVRIYDALHG.

Positions 16-94 constitute a GIY-YIG domain; the sequence is HLPGVYRHLD…IKSLRPRYNI (79 aa). In terms of domain architecture, UVR spans 203 to 238; it reads REVMDEIEARMLQASTELRFEEAAVLRDQMGSLSKV.

This sequence belongs to the UvrC family. As to quaternary structure, interacts with UvrB in an incision complex.

It localises to the cytoplasm. In terms of biological role, the UvrABC repair system catalyzes the recognition and processing of DNA lesions. UvrC both incises the 5' and 3' sides of the lesion. The N-terminal half is responsible for the 3' incision and the C-terminal half is responsible for the 5' incision. The protein is UvrABC system protein C of Bordetella bronchiseptica (strain ATCC BAA-588 / NCTC 13252 / RB50) (Alcaligenes bronchisepticus).